The chain runs to 413 residues: uncharacterized protein (413 aa).

Residues 14–34 (LLFFTVVIIPIFYYIYKIVYL) traverse the membrane as a helical segment. N-linked (GlcNAc...) asparagine; by host glycans are attached at residues Asn-46, Asn-55, Asn-103, Asn-171, Asn-179, Asn-184, Asn-220, Asn-252, Asn-260, Asn-273, Asn-362, Asn-366, Asn-374, Asn-378, Asn-393, and Asn-408. A compositionally biased stretch (low complexity) spans 250–263 (TKNSTETNSDNNSE). Residues 250–277 (TKNSTETNSDNNSEIVSETNSETNYSTP) form a disordered region. Residues 264–277 (IVSETNSETNYSTP) show a composition bias toward polar residues.

It is found in the membrane. This is an uncharacterized protein from Acanthamoeba polyphaga (Amoeba).